The primary structure comprises 417 residues: Gamma-glutamyl phosphate reductase (417 aa).

The protein belongs to the gamma-glutamyl phosphate reductase family.

The protein resides in the cytoplasm. The enzyme catalyses L-glutamate 5-semialdehyde + phosphate + NADP(+) = L-glutamyl 5-phosphate + NADPH + H(+). It functions in the pathway amino-acid biosynthesis; L-proline biosynthesis; L-glutamate 5-semialdehyde from L-glutamate: step 2/2. Catalyzes the NADPH-dependent reduction of L-glutamate 5-phosphate into L-glutamate 5-semialdehyde and phosphate. The product spontaneously undergoes cyclization to form 1-pyrroline-5-carboxylate. The chain is Gamma-glutamyl phosphate reductase from Legionella pneumophila subsp. pneumophila (strain Philadelphia 1 / ATCC 33152 / DSM 7513).